Reading from the N-terminus, the 268-residue chain is Ribonuclease P protein subunit p30 (268 aa).

Ala2 carries the post-translational modification N-acetylalanine. Ser251 is subject to Phosphoserine.

Belongs to the eukaryotic/archaeal RNase P protein component 3 family. As to quaternary structure, component of nuclear RNase P and RNase MRP ribonucleoproteins. RNase P consists of a catalytic RNA moiety and about 10 protein subunits; POP1, POP4, POP5, POP7, RPP14, RPP21, RPP25, RPP30, RPP38 and RPP40. Within the RNase P complex, POP1, POP7 and RPP25 form the 'finger' subcomplex, POP5, RPP14, RPP40 and homodimeric RPP30 form the 'palm' subcomplex, and RPP21, POP4 and RPP38 form the 'wrist' subcomplex. All subunits of the RNase P complex interact with the catalytic RNA. Several subunits of RNase P are also part of the RNase MRP complex. RNase MRP consists of a catalytic RNA moiety and about 8 protein subunits; POP1, POP7, RPP25, RPP30, RPP38, RPP40 and possibly also POP4 and POP5.

The protein resides in the nucleus. It localises to the nucleolus. Its function is as follows. Component of ribonuclease P, a ribonucleoprotein complex that generates mature tRNA molecules by cleaving their 5'-ends. Also a component of the MRP ribonuclease complex, which cleaves pre-rRNA sequences. This Bos taurus (Bovine) protein is Ribonuclease P protein subunit p30 (RPP30).